We begin with the raw amino-acid sequence, 432 residues long: DnaJ-like protein 1 (432 aa).

A J domain is found at 4–73; the sequence is DTEYYDLLGV…RAKYDKYGRK (70 aa). Residues 117–187 form a disordered region; that stretch reads NAEDEAEKEK…KKNEQVGAEA (71 aa).

It belongs to the DnaJ family. Interacts with SLN1.

Its subcellular location is the cytoplasm. Required for peroxisomal protein import which maintains the function of peroxisomes. The chain is DnaJ-like protein 1 (DJP1) from Saccharomyces cerevisiae (strain ATCC 204508 / S288c) (Baker's yeast).